We begin with the raw amino-acid sequence, 677 residues long: Probable sulfate transporter 4.2 (677 aa).

Topologically, residues 1–83 (MSLAVKDLST…RTYRWHQYFK (83 aa)) are cytoplasmic. A helical membrane pass occupies residues 84–104 (LDLMAGITVGIMLVPQAMSYA). Residues 105-108 (RLAG) lie on the Extracellular side of the membrane. The chain crosses the membrane as a helical span at residues 109–129 (LQPIYGLYSSFVPVFVYAVFG). Residues 130–133 (SSRQ) lie on the Cytoplasmic side of the membrane. A helical membrane pass occupies residues 134–154 (LAVGPVALVSLLVSNALSGIV). Residues 155-161 (DPSEELY) are Extracellular-facing. The helical transmembrane segment at 162–182 (TELAILLALMVGIFESIMGFL) threads the bilayer. Residues 183 to 189 (RLGWLIR) are Cytoplasmic-facing. Residues 190 to 210 (FISHSVISGFTTASAVVIGLS) form a helical membrane-spanning segment. Residues 211–241 (QLKYFLGYSVSRSSKIMPVIDSIIAGADQFK) lie on the Extracellular side of the membrane. The helical transmembrane segment at 242-262 (WPPFLLGCTILVILLVMKHVG) threads the bilayer. The Cytoplasmic portion of the chain corresponds to 263-269 (KAKKELR). A helical transmembrane segment spans residues 270 to 290 (FIRAAGPLTGLALGTIIAKVF). Residues 291-318 (HPPSITLVGDIPQGLPKFSFPKSFDHAK) are Extracellular-facing. Residues 319 to 339 (LLLPTSALITGVAILESVGIA) form a helical membrane-spanning segment. Residues 340-355 (KALAAKNRYELDSNSE) lie on the Cytoplasmic side of the membrane. A helical transmembrane segment spans residues 356 to 376 (LFGLGVANIFGSLFSAYPTTG). Topologically, residues 377-392 (SFSRSAVNSESEAKTG) are extracellular. A helical transmembrane segment spans residues 393 to 413 (LSGLVTGIIIGCSLLFLTPMF). Residues 414–420 (KFIPQCA) are Cytoplasmic-facing. A helical transmembrane segment spans residues 421 to 441 (LAAIVISAVSGLVDYEGAIFL). Topologically, residues 442-459 (WRVDKRDFTLWTITSTTT) are extracellular. The helical transmembrane segment at 460 to 480 (LFFGIEIGVLIGVGFSLAFVI) threads the bilayer. Over 481 to 677 (HESANPHIAV…LEEPLLSREK (197 aa)) the chain is Cytoplasmic. Residues 505-629 (QYPEAYTYNG…VRVHDAVQVC (125 aa)) enclose the STAS domain.

It belongs to the SLC26A/SulP transporter (TC 2.A.53) family.

It is found in the membrane. Functionally, h(+)/sulfate cotransporter that may play a role in the regulation of sulfate assimilation. The polypeptide is Probable sulfate transporter 4.2 (SULTR4;2) (Arabidopsis thaliana (Mouse-ear cress)).